Here is a 209-residue protein sequence, read N- to C-terminus: MIAIIDYGMGNIRSVEQALKYIGAAYIVTSDKEEIFRSDGVILPGVGAFPKAMDILEEKDLVRVLQEIGRSRKPLLGICLGMQLLFEKSEELQDCNGLSLLPGVIRKLKVPYKIPHMGWNELKKEGEIALWNGVEDGSFVYYVHSYYADCPNEIVYGISDYGVKVPGFVAKGNIYGAQFHPEKSGDIGMQMLKNFKGVVETWKSSQLSI.

Residues 1–205 (MIAIIDYGMG…KGVVETWKSS (205 aa)) enclose the Glutamine amidotransferase type-1 domain. Cysteine 79 serves as the catalytic Nucleophile. Residues histidine 180 and glutamate 182 contribute to the active site.

In terms of assembly, heterodimer of HisH and HisF.

The protein resides in the cytoplasm. It carries out the reaction 5-[(5-phospho-1-deoxy-D-ribulos-1-ylimino)methylamino]-1-(5-phospho-beta-D-ribosyl)imidazole-4-carboxamide + L-glutamine = D-erythro-1-(imidazol-4-yl)glycerol 3-phosphate + 5-amino-1-(5-phospho-beta-D-ribosyl)imidazole-4-carboxamide + L-glutamate + H(+). The enzyme catalyses L-glutamine + H2O = L-glutamate + NH4(+). The protein operates within amino-acid biosynthesis; L-histidine biosynthesis; L-histidine from 5-phospho-alpha-D-ribose 1-diphosphate: step 5/9. Its function is as follows. IGPS catalyzes the conversion of PRFAR and glutamine to IGP, AICAR and glutamate. The HisH subunit catalyzes the hydrolysis of glutamine to glutamate and ammonia as part of the synthesis of IGP and AICAR. The resulting ammonia molecule is channeled to the active site of HisF. In Bacillus anthracis (strain A0248), this protein is Imidazole glycerol phosphate synthase subunit HisH.